A 1271-amino-acid polypeptide reads, in one-letter code: Period circadian protein (1271 aa).

A compositionally biased stretch (polar residues) spans 1 to 14 (MEGESTESTQNTKV). Positions 1–102 (MEGESTESTQ…AEEQPHSSGT (102 aa)) are disordered. The segment covering 15 to 46 (SDSAYSNSCSNSQSQRSGSSKSMLSGSHSSGS) has biased composition (low complexity). The short motif at 65 to 78 (KRNKEKSRKKKKAK) is the Nuclear localization signal element. A compositionally biased stretch (basic residues) spans 65–78 (KRNKEKSRKKKKAK). Positions 80–90 (TQAQATISSSL) are enriched in polar residues. 2 consecutive PAS domains span residues 189–259 (TGPA…IPIA) and 339–409 (YRVP…MKKG). The tract at residues 596–660 (APVEVDPPKV…TNTSNAGTGT (65 aa)) is disordered. 3 tandem repeats follow at residues 657 to 658 (GT), 659 to 660 (GT), and 661 to 662 (GT). The interval 657 to 677 (GTGTGTVTGTGTIIATSGTGT) is 8 X 2 AA approximate tandem repeats of G-T. The stretch at 663-664 (VT) is one 4; approximate repeat. 4 consecutive repeat copies span residues 665–666 (GT), 667–668 (GT), 674–675 (GT), and 676–677 (GT). Polar residues-rich tracts occupy residues 746–772 (GAEN…NSAA) and 781–803 (GPDN…SGAE). Disordered regions lie at residues 746–913 (GAEN…VEKN), 928–956 (EYSS…PKQQ), 1014–1050 (PAPG…QQAA), 1143–1191 (TPAQ…NSNQ), and 1227–1271 (KTTD…HGDG). Basic and acidic residues-rich tracts occupy residues 805-822 (SRAE…HPRP) and 831-841 (RPDKTGPDKSG). Polar residues predominate over residues 864–884 (QDTRTTAGTPDSPPVSLTESL). 2 stretches are compositionally biased toward basic and acidic residues: residues 885 to 896 (LNKHNDEMEKFM) and 903 to 913 (SRGDRRTVEKN). Residues 1014-1023 (PAPGALSPTP) show a composition bias toward low complexity. Positions 1025 to 1036 (NQKHHHHAHQHA) are enriched in basic residues. A compositionally biased stretch (polar residues) spans 1143–1167 (TPAQLQRPSSQDTSVKTEPASNATP). Residues 1257–1271 (IMEHPEEDQTQHGDG) are compositionally biased toward basic and acidic residues.

As to quaternary structure, forms a heterodimer with timeless (TIM); the complex then translocates into the nucleus. In terms of processing, phosphorylated with a circadian rhythmicity, probably by the double-time protein (dbt). Phosphorylation could be implicated in the stability of per monomer and in the formation of heterodimer per-tim.

The protein localises to the nucleus. The protein resides in the cytoplasm. Its subcellular location is the perinuclear region. Essential for biological clock functions. Determines the period length of circadian and ultradian rhythms; an increase in PER dosage leads to shortened circadian rhythms and a decrease leads to lengthened circadian rhythms. Essential for the circadian rhythmicity of locomotor activity, eclosion behavior, and for the rhythmic component of the male courtship song that originates in the thoracic nervous system. The biological cycle depends on the rhythmic formation and nuclear localization of the TIM-PER complex. Light induces the degradation of TIM, which promotes elimination of PER. Nuclear activity of the heterodimer coordinatively regulates PER and TIM transcription through a negative feedback loop. Behaves as a negative element in circadian transcriptional loop. Does not appear to bind DNA, suggesting indirect transcriptional inhibition. The chain is Period circadian protein (per) from Drosophila pseudoobscura pseudoobscura (Fruit fly).